The following is a 159-amino-acid chain: 2-C-methyl-D-erythritol 2,4-cyclodiphosphate synthase (159 aa).

A divalent metal cation-binding residues include Asp-10 and His-12. 4-CDP-2-C-methyl-D-erythritol 2-phosphate contacts are provided by residues 10 to 12 and 37 to 38; these read DVH and HS. His-45 is a binding site for a divalent metal cation. Residues 59 to 61, 64 to 68, 103 to 109, 135 to 138, Phe-142, and Arg-145 each bind 4-CDP-2-C-methyl-D-erythritol 2-phosphate; these read DIG, FLDTD, AQAPKML, and TTTE.

The protein belongs to the IspF family. In terms of assembly, homotrimer. Requires a divalent metal cation as cofactor.

The catalysed reaction is 4-CDP-2-C-methyl-D-erythritol 2-phosphate = 2-C-methyl-D-erythritol 2,4-cyclic diphosphate + CMP. Its pathway is isoprenoid biosynthesis; isopentenyl diphosphate biosynthesis via DXP pathway; isopentenyl diphosphate from 1-deoxy-D-xylulose 5-phosphate: step 4/6. Functionally, involved in the biosynthesis of isopentenyl diphosphate (IPP) and dimethylallyl diphosphate (DMAPP), two major building blocks of isoprenoid compounds. Catalyzes the conversion of 4-diphosphocytidyl-2-C-methyl-D-erythritol 2-phosphate (CDP-ME2P) to 2-C-methyl-D-erythritol 2,4-cyclodiphosphate (ME-CPP) with a corresponding release of cytidine 5-monophosphate (CMP). The chain is 2-C-methyl-D-erythritol 2,4-cyclodiphosphate synthase from Francisella tularensis subsp. tularensis (strain FSC 198).